We begin with the raw amino-acid sequence, 261 residues long: MYPDLKGKVVAITGAASGLGKAMAIRFGKEQAKVVINYYSNKQDPNEVKEEVIKAGGEAVVVQGDVTKEEDVKNIVQTAIKEFGTLDIMINNAGLENPVPSHEMPLKDWDKVIGTNLTGAFLGSREAIKYFVENDIKGNVINMSSVHEVIPWPLFVHYAASKGGIKLMTETLALEYAPKGIRVNNIGPGAINTPINAEKFADPKQKADVESMIPMGYIGEPEEIAAVAAWLASKEASYVTGITLFADGGMTQYPSFQAGRG.

11–35 (AITGAASGLGKAMAIRFGKEQAKVV) serves as a coordination point for NADP(+). Ser-145 contributes to the substrate binding site. Tyr-158 acts as the Proton acceptor in catalysis.

The protein belongs to the short-chain dehydrogenases/reductases (SDR) family. As to quaternary structure, homotetramer.

It carries out the reaction D-glucose + NAD(+) = D-glucono-1,5-lactone + NADH + H(+). The catalysed reaction is D-glucose + NADP(+) = D-glucono-1,5-lactone + NADPH + H(+). In Bacillus subtilis (strain 168), this protein is Glucose 1-dehydrogenase (gdh).